A 714-amino-acid polypeptide reads, in one-letter code: Delta-like protein 1 (714 aa).

The signal sequence occupies residues 1–17; that stretch reads MGRRSALALAVVSALLC. Residues 18-537 lie on the Extracellular side of the membrane; it reads QVWSSGVFEL…VAAQGGSFPW (520 aa). The 45-residue stretch at 176–220 folds into the DSL domain; the sequence is FVCDEHYYGEGCSVFCRPRDDAFGHFTCGERGEKMCDPGWKGQYC. Disulfide bonds link Cys-178-Cys-187, Cys-191-Cys-203, Cys-211-Cys-220, Cys-225-Cys-236, Cys-229-Cys-242, Cys-244-Cys-253, Cys-256-Cys-267, Cys-262-Cys-273, Cys-275-Cys-284, Cys-291-Cys-303, Cys-297-Cys-313, Cys-315-Cys-324, Cys-331-Cys-342, Cys-336-Cys-351, Cys-353-Cys-362, Cys-369-Cys-380, Cys-374-Cys-390, Cys-392-Cys-401, Cys-408-Cys-419, Cys-413-Cys-428, Cys-430-Cys-439, Cys-446-Cys-457, Cys-451-Cys-466, Cys-468-Cys-477, Cys-484-Cys-495, Cys-489-Cys-504, and Cys-506-Cys-515. 3 consecutive EGF-like domains span residues 225-253, 256-284, and 291-324; these read CLPG…GRYC, CIRY…GLFC, and CTHH…GANC. Residues 331-362 form the EGF-like 4; calcium-binding domain; that stretch reads CAPSPCRNGGSCTDLEDSYSCTCPPGFYGKVC. 2 EGF-like domains span residues 369–401 and 408–439; these read CADG…GFNC and CSSS…GRYC. The region spanning 446–477 is the EGF-like 7; calcium-binding domain; that stretch reads CASSPCANGGTCRDSVNDFSCTCPPGYTGRNC. Asn-476 carries N-linked (GlcNAc...) asparagine glycosylation. The EGF-like 8 domain occupies 484–515; sequence CEHAPCHNGATCHQRGQRYMCECAQGYGGANC. The helical transmembrane segment at 538-560 threads the bilayer; sequence VAVCAGVVLVLLLLLGCAAVVVC. The Cytoplasmic portion of the chain corresponds to 561-714; sequence VRLKLQKHQP…KDECVIATEV (154 aa). Lys-605 is covalently cross-linked (Glycyl lysine isopeptide (Lys-Gly) (interchain with G-Cter in ubiquitin)). Position 630 is a phosphothreonine (Thr-630). Positions 644 to 656 are enriched in basic and acidic residues; sequence ATVRDAHSKRDTK. The interval 644-690 is disordered; the sequence is ATVRDAHSKRDTKCQSQGSVGEEKSTSTLRGGEVPDRKRPESVYSTS. Ser-685 is subject to Phosphoserine; by PKB. Ser-688 bears the Phosphoserine mark. The interaction with MAGI1 stretch occupies residues 711 to 714; that stretch reads ATEV.

In terms of assembly, homodimer. Interacts with TJP1. Interacts with MAGI1 (via PDZ domain); forms a complex with CTNNB1 and CDH2 and promotes recruitment to the adherens junction and stabilization on the cell surface. Interacts with PSEN1; undergoes a presenilin-dependent gamma-secretase cleavage that releases a Dll1-intracellular form. Interacts with MFAP5. Interacts with MIB1. Interacts with NEURL1B; leads to ubiquitination. Interacts with NEURL1. Interacts with SYNJ2BP; enhances DLL1 protein stability, and promotes Notch signaling in endothelial cells. Interacts with MAGI1, MAGI2, MAGI3 and MPDZ. Interacts (via ubiquitin) with EPN1 (via IUM domain); binding with NOTCH1 attached to neighboring cell, promotes ligand ubiquitination and EPN1 interaction, leading to NECD transendocytosis and Notch signaling. Interacts with NOTCH1. Ubiquitinated by MIB (MIB1 or MIB2), leading to its endocytosis and subsequent degradation. Ubiquitinated; promotes recycling back to the plasma membrane and confers a strong affinity for NOTCH1. Mono- and multi-ubiquitinated. Multi-ubiquitination of Lys-605 by MIB1 promotes both cis and trans-interaction with NOTCH1, as well as activation of Notch signaling. Ubiquitinated by NEURL1B. Post-translationally, phosphorylated in a membrane association-dependent manner. Phosphorylation at Ser-688 requires the presence of Ser-685, whereas phosphorylation at Thr-630 and Ser-685 occur independently of the other sites. Phosphorylation is required for full ligand activity in vitro and affects surface presentation, ectodomain shedding, and endocytosis. In terms of processing, O-fucosylated. Can be elongated to a disaccharide by MFNG.

The protein resides in the apical cell membrane. Its subcellular location is the cell junction. It localises to the adherens junction. The protein localises to the membrane raft. In terms of biological role, transmembrane ligand protein of NOTCH1, NOTCH2 and NOTCH3 receptors that binds the extracellular domain (ECD) of Notch receptor in a cis and trans fashion manner. Following transinteraction, ligand cells produce mechanical force that depends of a clathrin-mediated endocytosis, requiring ligand ubiquitination, EPN1 interaction, and actin polymerisation; these events promote Notch receptor extracellular domain (NECD) transendocytosis and triggers Notch signaling through induction of cleavage, hyperphosphorylation, and nuclear accumulation of the intracellular domain of Notch receptors (NICD). Is required for embryonic development and maintenance of adult stem cells in many different tissues and immune systeme; the DLL1-induced Notch signaling is mediated through an intercellular communication that regulates cell lineage, cell specification, cell patterning and morphogenesis through effects on differentiation and proliferation. Plays a role in brain development at different level, namely by regulating neuronal differentiation of neural precursor cells via cell-cell interaction, most likely through the lateral inhibitory system in an endogenous level dependent-manner. During neocortex development, Dll1-Notch signaling transmission is mediated by dynamic interactions between intermediate neurogenic progenitors and radial glia; the cell-cell interactions are mediated via dynamic and transient elongation processes, likely to reactivate/maintain Notch activity in neighboring progenitors, and coordinate progenitor cell division and differentiation across radial and zonal boundaries. During cerebellar development, regulates Bergmann glial monolayer formation and its morphological maturation through a Notch signaling pathway. At the retina and spinal cord level, regulates neurogenesis by preventing the premature differentiation of neural progenitors and also by maintaining progenitors in spinal cord through Notch signaling pathway. Also controls neurogenesis of the neural tube in a progenitor domain-specific fashion along the dorsoventral axis. Maintains quiescence of neural stem cells and plays a role as a fate determinant that segregates asymmetrically to one daughter cell during neural stem cells mitosis, resulting in neuronal differentiation in Dll1-inheriting cell. Plays a role in immune systeme development, namely the development of all T-cells and marginal zone (MZ) B cells. Blocks the differentiation of progenitor cells into the B-cell lineage while promoting the emergence of a population of cells with the characteristics of a T-cell/NK-cell precursor. Also plays a role during muscle development. During early development, inhibits myoblasts differentiation from the medial dermomyotomal lip and later regulates progenitor cell differentiation. Directly modulates cell adhesion and basal lamina formation in satellite cells through Notch signaling. Maintains myogenic progenitors pool by suppressing differentiation through down-regulation of MYOD1 and is required for satellite cell homing and PAX7 expression. During craniofacial and trunk myogenesis suppresses differentiation of cranial mesoderm-derived and somite-derived muscle via MYOD1 regulation but in cranial mesoderm-derived progenitors, is neither required for satellite cell homing nor for PAX7 expression. Also plays a role during pancreatic cell development. During type B pancreatic cell development, may be involved in the initiation of proximodistal patterning in the early pancreatic epithelium. Stimulates multipotent pancreatic progenitor cells proliferation and pancreatic growth by maintaining HES1 expression and PTF1A protein levels. During fetal stages of development, is required to maintain arterial identity and the responsiveness of arterial endothelial cells for VEGFA through regulation of KDR activation and NRP1 expression. Controls sprouting angiogenesis and subsequent vertical branch formation through regulation on tip cell differentiation. Negatively regulates goblet cell differentiation in intestine and controls secretory fat commitment through lateral inhibition in small intestine. Plays a role during inner ear development; negatively regulates auditory hair cell differentiation. Plays a role during nephron development through Notch signaling pathway. Regulates growth, blood pressure and energy homeostasis. This chain is Delta-like protein 1 (Dll1), found in Rattus norvegicus (Rat).